A 1440-amino-acid chain; its full sequence is Gag-Pol polyprotein (1440 aa).

Residue glycine 2 is the site of N-myristoyl glycine; by host attachment. Residues valine 7–leucine 31 form an interaction with Gp41 region. The tract at residues leucine 8 to arginine 43 is interaction with host CALM1. Residues lysine 12 to isoleucine 19 are interaction with host AP3D1. An interaction with membrane phosphatidylinositol 4,5-bisphosphate and RNA region spans residues aspartate 14–histidine 33. The short motif at tryptophan 16 to arginine 22 is the Nuclear export signal element. The Nuclear localization signal motif lies at lysine 26–lysine 32. The interaction with membrane phosphatidylinositol 4,5-bisphosphate stretch occupies residues glutamate 73 to serine 77. Tyrosine 138 carries the phosphotyrosine; by host modification. The segment at asparagine 195–glutamine 233 is interaction with human PPIA/CYPA and NUP153. Residues tyrosine 283 to leucine 369 are dimerization/Multimerization of capsid protein p24. 2 consecutive CCHC-type zinc fingers follow at residues isoleucine 396–alanine 413 and lysine 417–glutamate 434. The segment at proline 494–leucine 498 is dimerization of protease. In terms of domain architecture, Peptidase A2 spans lysine 513–methionine 582. Aspartate 518 (for protease activity; shared with dimeric partner) is an active-site residue. Dimerization of protease regions lie at residues glycine 542–lysine 548 and asparagine 581–proline 593. Residues glutamate 636–leucine 826 enclose the Reverse transcriptase domain. Mg(2+) contacts are provided by aspartate 702, aspartate 777, and aspartate 778. The RT 'primer grip' stretch occupies residues phenylalanine 819–histidine 827. The Tryptophan repeat motif motif lies at tryptophan 990–tryptophan 1006. One can recognise an RNase H type-1 domain in the interval isoleucine 1026–arginine 1149. Positions 1035, 1070, 1090, and 1141 each coordinate Mg(2+). Residues aspartate 1155–glutamine 1196 form an Integrase-type zinc finger. Histidine 1164, histidine 1168, cysteine 1192, and cysteine 1195 together coordinate Zn(2+). The 151-residue stretch at valine 1206–isoleucine 1356 folds into the Integrase catalytic domain. Mg(2+) is bound by residues aspartate 1216, aspartate 1268, and glutamate 1304. A DNA-binding region (integrase-type) is located at residues phenylalanine 1375–aspartate 1422.

As to quaternary structure, homotrimer; further assembles as hexamers of trimers. Interacts with gp41 (via C-terminus). Interacts with host CALM1; this interaction induces a conformational change in the Matrix protein, triggering exposure of the myristate group. Interacts with host AP3D1; this interaction allows the polyprotein trafficking to multivesicular bodies during virus assembly. Part of the pre-integration complex (PIC) which is composed of viral genome, matrix protein, Vpr and integrase. Homodimer; the homodimer further multimerizes as homohexamers or homopentamers. Interacts with human PPIA/CYPA; This interaction stabilizes the capsid. Interacts with human NUP153. Interacts with host PDZD8; this interaction stabilizes the capsid. Interacts with monkey TRIM5; this interaction destabilizes the capsid. In terms of assembly, homodimer, whose active site consists of two apposed aspartic acid residues. As to quaternary structure, heterodimer of p66 RT and p51 RT (RT p66/p51). Heterodimerization of RT is essential for DNA polymerase activity. The overall folding of the subdomains is similar in p66 RT and p51 RT but the spatial arrangements of the subdomains are dramatically different. Homotetramer; may further associate as a homohexadecamer. Part of the pre-integration complex (PIC) which is composed of viral genome, matrix protein, Vpr and integrase. Interacts with human SMARCB1/INI1 and human PSIP1/LEDGF isoform 1. Interacts with human KPNA3; this interaction might play a role in nuclear import of the pre-integration complex. Interacts with human NUP153; this interaction might play a role in nuclear import of the pre-integration complex. The cofactor is Mg(2+). In terms of processing, specific enzymatic cleavages by the viral protease yield mature proteins. The protease is released by autocatalytic cleavage. The polyprotein is cleaved during and after budding, this process is termed maturation. Proteolytic cleavage of p66 RT removes the RNase H domain to yield the p51 RT subunit. Nucleocapsid protein p7 might be further cleaved after virus entry. Post-translationally, tyrosine phosphorylated presumably in the virion by a host kinase. Phosphorylation is apparently not a major regulator of membrane association. Phosphorylated possibly by host MAPK1; this phosphorylation is necessary for Pin1-mediated virion uncoating. In terms of processing, methylated by host PRMT6, impairing its function by reducing RNA annealing and the initiation of reverse transcription.

Its subcellular location is the host cell membrane. The protein localises to the host endosome. The protein resides in the host multivesicular body. It is found in the virion membrane. It localises to the host nucleus. Its subcellular location is the host cytoplasm. The protein localises to the virion. It catalyses the reaction Specific for a P1 residue that is hydrophobic, and P1' variable, but often Pro.. The catalysed reaction is Endohydrolysis of RNA in RNA/DNA hybrids. Three different cleavage modes: 1. sequence-specific internal cleavage of RNA. Human immunodeficiency virus type 1 and Moloney murine leukemia virus enzymes prefer to cleave the RNA strand one nucleotide away from the RNA-DNA junction. 2. RNA 5'-end directed cleavage 13-19 nucleotides from the RNA end. 3. DNA 3'-end directed cleavage 15-20 nucleotides away from the primer terminus.. The enzyme catalyses 3'-end directed exonucleolytic cleavage of viral RNA-DNA hybrid.. It carries out the reaction DNA(n) + a 2'-deoxyribonucleoside 5'-triphosphate = DNA(n+1) + diphosphate. With respect to regulation, protease: The viral protease is inhibited by many synthetic protease inhibitors (PIs), such as amprenavir, atazanavir, indinavir, loprinavir, nelfinavir, ritonavir and saquinavir. Use of protease inhibitors in tritherapy regimens permit more ambitious therapeutic strategies. Reverse transcriptase/ribonuclease H: RT can be inhibited either by nucleoside RT inhibitors (NRTIs) or by non nucleoside RT inhibitors (NNRTIs). NRTIs act as chain terminators, whereas NNRTIs inhibit DNA polymerization by binding a small hydrophobic pocket near the RT active site and inducing an allosteric change in this region. Classical NRTIs are abacavir, adefovir (PMEA), didanosine (ddI), lamivudine (3TC), stavudine (d4T), tenofovir (PMPA), zalcitabine (ddC), and zidovudine (AZT). Classical NNRTIs are atevirdine (BHAP U-87201E), delavirdine, efavirenz (DMP-266), emivirine (I-EBU), and nevirapine (BI-RG-587). The tritherapies used as a basic effective treatment of AIDS associate two NRTIs and one NNRTI. In terms of biological role, mediates, with Gag polyprotein, the essential events in virion assembly, including binding the plasma membrane, making the protein-protein interactions necessary to create spherical particles, recruiting the viral Env proteins, and packaging the genomic RNA via direct interactions with the RNA packaging sequence (Psi). Gag-Pol polyprotein may regulate its own translation, by the binding genomic RNA in the 5'-UTR. At low concentration, the polyprotein would promote translation, whereas at high concentration, the polyprotein would encapsidate genomic RNA and then shut off translation. Functionally, targets the polyprotein to the plasma membrane via a multipartite membrane-binding signal, that includes its myristoylated N-terminus. Matrix protein is part of the pre-integration complex. Implicated in the release from host cell mediated by Vpu. Binds to RNA. Forms the conical core that encapsulates the genomic RNA-nucleocapsid complex in the virion. Most core are conical, with only 7% tubular. The core is constituted by capsid protein hexamer subunits. The core is disassembled soon after virion entry. Host restriction factors such as TRIM5-alpha or TRIMCyp bind retroviral capsids and cause premature capsid disassembly, leading to blocks in reverse transcription. Capsid restriction by TRIM5 is one of the factors which restricts HIV-1 to the human species. Host PIN1 apparently facilitates the virion uncoating. On the other hand, interactions with PDZD8 or CYPA stabilize the capsid. Its function is as follows. Encapsulates and protects viral dimeric unspliced genomic RNA (gRNA). Binds these RNAs through its zinc fingers. Acts as a nucleic acid chaperone which is involved in rearangement of nucleic acid secondary structure during gRNA retrotranscription. Also facilitates template switch leading to recombination. As part of the polyprotein, participates in gRNA dimerization, packaging, tRNA incorporation and virion assembly. In terms of biological role, aspartyl protease that mediates proteolytic cleavages of Gag and Gag-Pol polyproteins during or shortly after the release of the virion from the plasma membrane. Cleavages take place as an ordered, step-wise cascade to yield mature proteins. This process is called maturation. Displays maximal activity during the budding process just prior to particle release from the cell. Also cleaves Nef and Vif, probably concomitantly with viral structural proteins on maturation of virus particles. Hydrolyzes host EIF4GI and PABP1 in order to shut off the capped cellular mRNA translation. The resulting inhibition of cellular protein synthesis serves to ensure maximal viral gene expression and to evade host immune response. Also mediates cleavage of host YTHDF3. Mediates cleavage of host CARD8, thereby activating the CARD8 inflammasome, leading to the clearance of latent HIV-1 in patient CD4(+) T-cells after viral reactivation; in contrast, HIV-1 can evade CARD8-sensing when its protease remains inactive in infected cells prior to viral budding. Functionally, multifunctional enzyme that converts the viral RNA genome into dsDNA in the cytoplasm, shortly after virus entry into the cell. This enzyme displays a DNA polymerase activity that can copy either DNA or RNA templates, and a ribonuclease H (RNase H) activity that cleaves the RNA strand of RNA-DNA heteroduplexes in a partially processive 3' to 5' endonucleasic mode. Conversion of viral genomic RNA into dsDNA requires many steps. A tRNA(3)-Lys binds to the primer-binding site (PBS) situated at the 5'-end of the viral RNA. RT uses the 3' end of the tRNA primer to perform a short round of RNA-dependent minus-strand DNA synthesis. The reading proceeds through the U5 region and ends after the repeated (R) region which is present at both ends of viral RNA. The portion of the RNA-DNA heteroduplex is digested by the RNase H, resulting in a ssDNA product attached to the tRNA primer. This ssDNA/tRNA hybridizes with the identical R region situated at the 3' end of viral RNA. This template exchange, known as minus-strand DNA strong stop transfer, can be either intra- or intermolecular. RT uses the 3' end of this newly synthesized short ssDNA to perform the RNA-dependent minus-strand DNA synthesis of the whole template. RNase H digests the RNA template except for two polypurine tracts (PPTs) situated at the 5'-end and near the center of the genome. It is not clear if both polymerase and RNase H activities are simultaneous. RNase H probably can proceed both in a polymerase-dependent (RNA cut into small fragments by the same RT performing DNA synthesis) and a polymerase-independent mode (cleavage of remaining RNA fragments by free RTs). Secondly, RT performs DNA-directed plus-strand DNA synthesis using the PPTs that have not been removed by RNase H as primers. PPTs and tRNA primers are then removed by RNase H. The 3' and 5' ssDNA PBS regions hybridize to form a circular dsDNA intermediate. Strand displacement synthesis by RT to the PBS and PPT ends produces a blunt ended, linear dsDNA copy of the viral genome that includes long terminal repeats (LTRs) at both ends. Catalyzes viral DNA integration into the host chromosome, by performing a series of DNA cutting and joining reactions. This enzyme activity takes place after virion entry into a cell and reverse transcription of the RNA genome in dsDNA. The first step in the integration process is 3' processing. This step requires a complex comprising the viral genome, matrix protein, Vpr and integrase. This complex is called the pre-integration complex (PIC). The integrase protein removes 2 nucleotides from each 3' end of the viral DNA, leaving recessed CA OH's at the 3' ends. In the second step, the PIC enters cell nucleus. This process is mediated through integrase and Vpr proteins, and allows the virus to infect a non dividing cell. This ability to enter the nucleus is specific of lentiviruses, other retroviruses cannot and rely on cell division to access cell chromosomes. In the third step, termed strand transfer, the integrase protein joins the previously processed 3' ends to the 5' ends of strands of target cellular DNA at the site of integration. The 5'-ends are produced by integrase-catalyzed staggered cuts, 5 bp apart. A Y-shaped, gapped, recombination intermediate results, with the 5'-ends of the viral DNA strands and the 3' ends of target DNA strands remaining unjoined, flanking a gap of 5 bp. The last step is viral DNA integration into host chromosome. This involves host DNA repair synthesis in which the 5 bp gaps between the unjoined strands are filled in and then ligated. Since this process occurs at both cuts flanking the HIV genome, a 5 bp duplication of host DNA is produced at the ends of HIV-1 integration. Alternatively, Integrase may catalyze the excision of viral DNA just after strand transfer, this is termed disintegration. The sequence is that of Gag-Pol polyprotein (gag-pol) from Human immunodeficiency virus type 1 group M subtype A (isolate MAL) (HIV-1).